We begin with the raw amino-acid sequence, 357 residues long: Peptide chain release factor 1 (357 aa).

At glutamine 232 the chain carries N5-methylglutamine. The segment covering 282–291 (KQRAEQEAAR) has biased composition (basic and acidic residues). The disordered stretch occupies residues 282-302 (KQRAEQEAARRSQVGTGDRSE).

This sequence belongs to the prokaryotic/mitochondrial release factor family. Methylated by PrmC. Methylation increases the termination efficiency of RF1.

It localises to the cytoplasm. In terms of biological role, peptide chain release factor 1 directs the termination of translation in response to the peptide chain termination codons UAG and UAA. This chain is Peptide chain release factor 1, found in Solidesulfovibrio magneticus (strain ATCC 700980 / DSM 13731 / RS-1) (Desulfovibrio magneticus).